A 257-amino-acid polypeptide reads, in one-letter code: Early E1A protein (257 aa).

Disordered regions lie at residues 26–46 (NATMGDDHPEPPTPFGTPSLH) and 75–103 (LAAEEASSPSSDSDSSLHTPRHDRGEKEI). An interaction with RB1 in competition with E2F1 region spans residues 43–51 (PSLHDLYDL). Residues 75 to 91 (LAAEEASSPSSDSDSSL) are compositionally biased toward low complexity. Residues 79 to 144 (EASSPSSDSD…ASHGVQAVSE (66 aa)) form an interaction with UBE2I region. The span at 94-103 (PRHDRGEKEI) shows a compositional bias: basic and acidic residues. Residues 104 to 108 (PGLKW) carry the PXLXP motif, interaction with host ZMYND11 motif. An LXCXE motif, interaction with host RB1 and TMEM173/STING motif is present at residues 113-117 (LRCYE). A zinc finger spans residues 158–178 (CKSCEFHRINTGDKAVLCALC). Positions 191–221 (VSDADDETPTTESTLSPPEIGTSPSDNIVRP) are disordered. Positions 200 to 209 (TTESTLSPPE) are enriched in low complexity. Residues 246–250 (PLDLC) carry the PXDLS motif, CTBP-binding motif. The Nuclear localization signal signature appears at 252 to 257 (RKRPRH).

It belongs to the adenoviridae E1A protein family. As to quaternary structure, interacts with host UBE2I; this interaction interferes with polySUMOylation. Interacts with host RB1; this interaction induces the aberrant dissociation of RB1-E2F1 complex thereby disrupting the activity of RB1 and activating E2F1-regulated genes. Interacts with host ATF7; the interaction enhances ATF7-mediated viral transactivation activity which requires the zinc binding domains of both proteins. Isoform early E1A 32 kDa protein and isoform early E1A 26 kDa protein interact (via N-terminus) with CUL1 and E3 ubiquitin ligase RBX1; these interactions inhibit RBX1-CUL1-dependent elongation reaction of ubiquitin chains and attenuate ubiquitination of SCF(FBXW7) target proteins. Interacts (via PXLXP motif) with host ZMYND11/BS69 (via MYND-type zinc finger); this interaction inhibits E1A mediated transactivation. Interacts with host EP300; this interaction stimulates the acetylation of RB1 by recruiting EP300 and RB1 into a multimeric-protein complex. Interacts with host CTBP1 and CTBP2; this interaction seems to potentiate viral replication. Interacts with host DCAF7. Interacts with host DYRK1A. Interacts with host KPNA4; this interaction allows E1A import into the host nucleus. Interacts with host EP400; this interaction stabilizes MYC. Interacts with host TBP protein; this interaction probably disrupts the TBP-TATA complex. Interacts (via LXCXE motif) with host TMEM173/STING; this interaction impairs the ability of TMEM173/STING to sense cytosolic DNA and promote the production of type I interferon (IFN-alpha and IFN-beta). Interacts (via C-terminus) with host ZBED1/hDREF (via C-terminus); the interaction is direct.

The protein resides in the host nucleus. In terms of biological role, plays a role in viral genome replication by driving entry of quiescent cells into the cell cycle. Stimulation of progression from G1 to S phase allows the virus to efficiently use the cellular DNA replicating machinery to achieve viral genome replication. E1A protein has both transforming and trans-activating activities. Induces the disassembly of the E2F1 transcription factor from RB1 by direct competition for the same binding site on RB1, with subsequent transcriptional activation of E2F1-regulated S-phase genes and of the E2 region of the adenoviral genome. Release of E2F1 leads to the ARF-mediated inhibition of MDM2 and causes TP53/p53 to accumulate because it is not targeted for degradation by MDM2-mediated ubiquitination anymore. This increase in TP53, in turn, would arrest the cell proliferation and direct its death but this effect is counteracted by the viral protein E1B-55K. Inactivation of the ability of RB1 to arrest the cell cycle is critical for cellular transformation, uncontrolled cellular growth and proliferation induced by viral infection. Interaction with RBX1 and CUL1 inhibits ubiquitination of the proteins targeted by SCF(FBXW7) ubiquitin ligase complex, and may be linked to unregulated host cell proliferation. The tumorigenesis-restraining activity of E1A may be related to the disruption of the host CtBP-CtIP complex through the CtBP binding motif. Interaction with host TMEM173/STING impairs the ability of TMEM173/STING to sense cytosolic DNA and promote the production of type I interferon (IFN-alpha and IFN-beta). Promotes the sumoylation of host ZBED1/hDREF with SUMO1. This is Early E1A protein from Human adenovirus E serotype 4 (HAdV-4).